The primary structure comprises 218 residues: N-(5'-phosphoribosyl)anthranilate isomerase (218 aa).

This sequence belongs to the TrpF family.

The catalysed reaction is N-(5-phospho-beta-D-ribosyl)anthranilate = 1-(2-carboxyphenylamino)-1-deoxy-D-ribulose 5-phosphate. The protein operates within amino-acid biosynthesis; L-tryptophan biosynthesis; L-tryptophan from chorismate: step 3/5. In Halalkalibacterium halodurans (strain ATCC BAA-125 / DSM 18197 / FERM 7344 / JCM 9153 / C-125) (Bacillus halodurans), this protein is N-(5'-phosphoribosyl)anthranilate isomerase.